The following is a 374-amino-acid chain: Methylthioribose-1-phosphate isomerase (374 aa).

The active-site Proton donor is the Asp-251.

Belongs to the eIF-2B alpha/beta/delta subunits family. MtnA subfamily.

Its subcellular location is the cytoplasm. The protein localises to the nucleus. The enzyme catalyses 5-(methylsulfanyl)-alpha-D-ribose 1-phosphate = 5-(methylsulfanyl)-D-ribulose 1-phosphate. It functions in the pathway amino-acid biosynthesis; L-methionine biosynthesis via salvage pathway; L-methionine from S-methyl-5-thio-alpha-D-ribose 1-phosphate: step 1/6. Catalyzes the interconversion of methylthioribose-1-phosphate (MTR-1-P) into methylthioribulose-1-phosphate (MTRu-1-P). The sequence is that of Methylthioribose-1-phosphate isomerase from Oryza sativa subsp. indica (Rice).